A 370-amino-acid polypeptide reads, in one-letter code: Actin-related protein 2/3 complex subunit 1A (370 aa).

WD repeat units follow at residues 6-45 (FLLE…WTKA), 50-89 (EHNG…WKPT), 140-179 (PIRS…VDEK), 202-241 (GTGG…QVST), 244-284 (TEFL…TFVS), and 322-365 (LHQN…SSIQ).

The protein belongs to the WD repeat ARPC1 family. As to quaternary structure, probable component of the Arp2/3 complex in which it may replace ARPC1B.

The protein localises to the cytoplasm. Its subcellular location is the cytoskeleton. It localises to the nucleus. Its function is as follows. Probably functions as a component of the Arp2/3 complex which is involved in regulation of actin polymerization and together with an activating nucleation-promoting factor (NPF) mediates the formation of branched actin networks. In addition to its role in the cytoplasmic cytoskeleton, the Arp2/3 complex also promotes actin polymerization in the nucleus, thereby regulating gene transcription and repair of damaged DNA. In Rattus norvegicus (Rat), this protein is Actin-related protein 2/3 complex subunit 1A (Arpc1a).